The chain runs to 311 residues: Sensor histidine kinase YcbM (311 aa).

Residues 1–21 form a helical membrane-spanning segment; sequence MTVLWVAAVIALACLNVIQFI. At 22–311 the chain is on the cytoplasmic side; that stretch reads MKKKRDGNLA…FTITLKRMTY (290 aa). The Histidine kinase domain occupies 92-310; the sequence is NMSHDLKTPL…AFTITLKRMT (219 aa). The residue at position 95 (histidine 95) is a Phosphohistidine; by autocatalysis.

It localises to the cell membrane. It catalyses the reaction ATP + protein L-histidine = ADP + protein N-phospho-L-histidine.. Functionally, member of the two-component regulatory system YcbM/YcbL. Probably activates YcbL by phosphorylation. The chain is Sensor histidine kinase YcbM (ycbM) from Bacillus subtilis (strain 168).